The following is a 239-amino-acid chain: Apoptosis regulator Bcl-2 (239 aa).

Residues 10–30 (DNREIVMKYIHYKLSQRGYEW) carry the BH4 motif. Positions 39-85 (PPGAAPAPGIFSSQPGHTPHPAASRDPVARTSPLQTPAAPGAAAGPA) are disordered. A Phosphothreonine; by MAPK8 modification is found at Thr69. Position 70 is a phosphoserine; by MAPK8 and PKC (Ser70). Low complexity predominate over residues 75 to 85 (PAAPGAAAGPA). Phosphoserine; by MAPK8 is present on Ser87. The tract at residues 92-107 (VVHLTLRQAGDDFSRR) is required for interaction with SEPTIN4 isoform ARTS. Required XIAP-mediated ubiquitination and apoptosis. The BH3 signature appears at 93-107 (VHLTLRQAGDDFSRR). The BH1 motif lies at 136–155 (ELFRDGVNWGRIVAFFEFGG). A BH2 motif is present at residues 187–202 (TWIQDNGGWDAFVELY). A helical transmembrane segment spans residues 212 to 233 (FSWLSLKTLLSLALVGACITLG).

The protein belongs to the Bcl-2 family. As to quaternary structure, forms homodimers, and heterodimers with BAX, BAD, BAK and Bcl-X(L). Heterodimerization with BAX requires intact BH1 and BH2 motifs, and is necessary for anti-apoptotic activity. Part of a complex composed of SEPTIN4 isoform ARTS, XIAP and BCL2, within the complex interacts (via BH3 domain) with SEPTIN4 isoform ARTS and XIAP, SEPTIN4 isoform ARTS acts as a scaffold protein and stabilizes the complex. Component of the complex, at least composed of LRPPRC, BECN1 and BCL2; the interactions prevent BECN1 from forming an autophagy-inducing complex with PIK3C3. Interacts with EI24. Also interacts with APAF1, BBC3, BCL2L1, BNIPL, MRPL41 and TP53BP2. Binding to FKBP8 seems to target BCL2 to the mitochondria and probably interferes with the binding of BCL2 to its targets. Interacts with BAG1 in an ATP-dependent manner. Interacts with RAF1 (the 'Ser-338' and 'Ser-339' phosphorylated form). Interacts (via the BH4 domain) with EGLN3; the interaction prevents the formation of the BAX-BCL2 complex and inhibits the anti-apoptotic activity of BCL2. Interacts with G0S2; this interaction also prevents the formation of the anti-apoptotic BAX-BCL2 complex. Interacts with RTL10/BOP. Interacts with the SCF(FBXO10) complex. Interacts (via the loop between motifs BH4 and BH3) with NLRP1 (via LRR repeats), but not with NLRP2, NLRP3, NLRP4, PYCARD, nor MEFV. Interacts with GIMAP3/IAN4, GIMAP4/IAN1 and GIMAP5/IAN5. Interacts with BCAP31. Interacts with IRF3; the interaction is inhibited by Sendai virus infection. Interacts with BECN1; thereby inhibiting autophagy in non-starvation conditions. Interacts with AMBRA1; thereby inhibiting autophagy. In terms of assembly, (Microbial infection) Interacts with Toxoplasma gondii ROP17; the interaction probably promotes BCL2 phosphorylation and degradation. Phosphorylation/dephosphorylation on Ser-70 regulates anti-apoptotic activity. Growth factor-stimulated phosphorylation on Ser-70 by PKC is required for the anti-apoptosis activity and occurs during the G2/M phase of the cell cycle. In the absence of growth factors, BCL2 appears to be phosphorylated by other protein kinases such as ERKs and stress-activated kinases. Phosphorylated by MAPK8/JNK1 at Thr-69, Ser-70 and Ser-87, which stimulates starvation-induced autophagy. Dephosphorylated by protein phosphatase 2A (PP2A). In terms of processing, proteolytically cleaved by caspases during apoptosis. The cleaved protein, lacking the BH4 motif, has pro-apoptotic activity, causes the release of cytochrome c into the cytosol promoting further caspase activity. Post-translationally, monoubiquitinated by PRKN, leading to an increase in its stability. Ubiquitinated by SCF(FBXO10), leading to its degradation by the proteasome. Ubiquitinated by XIAP, leading to its degradation by the proteasome. As to expression, expressed in a variety of tissues.

It localises to the mitochondrion outer membrane. The protein resides in the nucleus membrane. It is found in the endoplasmic reticulum membrane. The protein localises to the cytoplasm. In terms of biological role, suppresses apoptosis in a variety of cell systems including factor-dependent lymphohematopoietic and neural cells. Regulates cell death by controlling the mitochondrial membrane permeability. Appears to function in a feedback loop system with caspases. Inhibits caspase activity either by preventing the release of cytochrome c from the mitochondria and/or by binding to the apoptosis-activating factor (APAF-1). Also acts as an inhibitor of autophagy: interacts with BECN1 and AMBRA1 during non-starvation conditions and inhibits their autophagy function. May attenuate inflammation by impairing NLRP1-inflammasome activation, hence CASP1 activation and IL1B release. This Homo sapiens (Human) protein is Apoptosis regulator Bcl-2 (BCL2).